We begin with the raw amino-acid sequence, 407 residues long: DNA-directed RNA polymerase subunit Rpo1C (407 aa).

The protein belongs to the RNA polymerase beta' chain family. In terms of assembly, part of the RNA polymerase complex.

Its subcellular location is the cytoplasm. It carries out the reaction RNA(n) + a ribonucleoside 5'-triphosphate = RNA(n+1) + diphosphate. In terms of biological role, DNA-dependent RNA polymerase (RNAP) catalyzes the transcription of DNA into RNA using the four ribonucleoside triphosphates as substrates. Forms part of the jaw domain. The protein is DNA-directed RNA polymerase subunit Rpo1C of Aeropyrum pernix (strain ATCC 700893 / DSM 11879 / JCM 9820 / NBRC 100138 / K1).